The chain runs to 1488 residues: DNA polymerase alpha catalytic subunit (1488 aa).

Disordered stretches follow at residues methionine 1–alanine 22, leucine 79–alanine 124, and phenylalanine 236–aspartate 325. Over residues phenylalanine 83 to glutamate 93 the composition is skewed to acidic residues. Residues arginine 96–lysine 103 carry the Nuclear localization signal motif. Residues serine 99–proline 113 are compositionally biased toward basic residues. At serine 239 the chain carries Phosphoserine. Over residues isoleucine 242 to glutamate 258 the composition is skewed to basic and acidic residues. Residues proline 260–phenylalanine 278 are compositionally biased toward acidic residues. Residues serine 262 and serine 269 each carry the phosphoserine modification. Polar residues predominate over residues threonine 286–lysine 303. A compositionally biased stretch (basic and acidic residues) spans valine 304–aspartate 325. Threonine 314 is modified (phosphothreonine). Serine 317 bears the Phosphoserine mark. The tract at residues aspartate 638–glutamate 758 is contains conserved residues essential for 3' -&gt; 5' exonuclease activities. 2 DNA-binding regions span residues glutamine 675–valine 734 and proline 1255–serine 1380. Zn(2+) contacts are provided by cysteine 1296, cysteine 1299, cysteine 1324, cysteine 1329, cysteine 1362, cysteine 1367, cysteine 1385, and cysteine 1388. The segment at cysteine 1296–serine 1327 adopts a CysA-type zinc-finger fold. The short motif at cysteine 1362–cysteine 1388 is the CysB motif element.

It belongs to the DNA polymerase type-B family. As to quaternary structure, component of the alpha DNA polymerase complex (also known as the alpha DNA polymerase-primase complex) consisting of four subunits: the catalytic subunit PolA1, the regulatory subunit PolA2, and the primase complex subunits Prim1 and Prim2 respectively. PolA1 associates with the DNA primase complex before association with PolA2. Interacts with Dpit47; the interaction inhibits the activity of the DNA polymerase and occurs only in proliferating cells but not in quiescent cells. In embryos, a cleaved form of 130 kDa is produced up to cycle 14 and then disappears. In terms of tissue distribution, expressed in embryos (at protein level).

The protein resides in the nucleus. The catalysed reaction is DNA(n) + a 2'-deoxyribonucleoside 5'-triphosphate = DNA(n+1) + diphosphate. With respect to regulation, inhibited by N2-(p-n-butylphenyl) deoxyguanosine 5'-triphosphate and N2-(p-n-butylphenyl) deoxyadenosine 5'-triphosphate. DNA synthesis is not inhibited by fungal toxin alpha-amaitin. The 3'-5' exonuclease activity is inhibited by 10mM dGMP. In terms of biological role, catalytic subunit of the DNA polymerase alpha complex (also known as the alpha DNA polymerase-primase complex) which plays an essential role in the initiation of DNA synthesis. During the S phase of the cell cycle, the DNA polymerase alpha complex (composed of a catalytic subunit PolA1, an accessory subunit PolA2 and two primase subunits, the catalytic subunit Prim1 and the regulatory subunit Prim2) is recruited to DNA at the replicative forks. The primase subunit of the polymerase alpha complex initiates DNA synthesis by oligomerising short RNA primers on both leading and lagging strands. These primers are initially extended by the polymerase alpha catalytic subunit and subsequently transferred to polymerase delta and polymerase epsilon for processive synthesis on the lagging and leading strand, respectively. In addition to polymerase activity, exhibits 3' to 5' exonuclease activity. The polypeptide is DNA polymerase alpha catalytic subunit (Drosophila melanogaster (Fruit fly)).